An 840-amino-acid polypeptide reads, in one-letter code: Probable inorganic carbon transporter subunit DabA (840 aa).

The Zn(2+) site is built by Cys-355, Asp-357, His-539, and Cys-554.

Belongs to the inorganic carbon transporter (TC 9.A.2) DabA family. As to quaternary structure, forms a complex with DabB. The cofactor is Zn(2+).

The protein resides in the cell membrane. In terms of biological role, part of an energy-coupled inorganic carbon pump. In Roseiflexus castenholzii (strain DSM 13941 / HLO8), this protein is Probable inorganic carbon transporter subunit DabA.